We begin with the raw amino-acid sequence, 331 residues long: 5,10-methylenetetrahydromethanopterin reductase (331 aa).

This sequence belongs to the mer family.

It is found in the cytoplasm. The enzyme catalyses 5-methyl-5,6,7,8-tetrahydromethanopterin + oxidized coenzyme F420-(gamma-L-Glu)(n) + H(+) = 5,10-methylenetetrahydromethanopterin + reduced coenzyme F420-(gamma-L-Glu)(n). It functions in the pathway one-carbon metabolism; methanogenesis from CO(2); methyl-coenzyme M from 5,10-methylene-5,6,7,8-tetrahydromethanopterin: step 1/2. Functionally, catalyzes the reversible reduction of methylene-H(4)MPT to methyl-H(4)MPT. In Methanocaldococcus jannaschii (strain ATCC 43067 / DSM 2661 / JAL-1 / JCM 10045 / NBRC 100440) (Methanococcus jannaschii), this protein is 5,10-methylenetetrahydromethanopterin reductase.